We begin with the raw amino-acid sequence, 1132 residues long: Large proline-rich protein BAG6 (1132 aa).

An N-acetylmethionine modification is found at Met1. Positions 17–92 (LEVLVKTLDS…HLVERAPPQT (76 aa)) constitute a Ubiquitin-like domain. 2 disordered regions span residues 87 to 126 (RAPPQTHLPSGASSGTGSASATHGGGSPPGTRGPGASVHD) and 189 to 272 (LQCR…NHPS). The span at 95–108 (PSGASSGTGSASAT) shows a compositional bias: low complexity. Ser96 and Ser113 each carry phosphoserine. The residue at position 117 (Thr117) is a Phosphothreonine. Pro residues-rich tracts occupy residues 200 to 210 (SQPPPQPPAVT) and 251 to 262 (TPGPAPAGPTPA). Residues 242–270 (RAPAQNPELTPGPAPAGPTPAPETNAPNH) form repeat 1. The 4 X 29 AA approximate repeats stretch occupies residues 242–636 (RAPAQNPELT…VASPTITVAM (395 aa)). Thr350 carries the post-translational modification Phosphothreonine. Disordered regions lie at residues 385 to 441 (VTMT…TSHP), 461 to 528 (IQDS…TLQG), and 560 to 603 (PGMA…PSMA). Positions 393-407 (RPPPTPNAEAPPPGP) are enriched in pro residues. Residues 408-426 (GQASSVAPSSTNVESSAEG) show a composition bias toward low complexity. The stretch at 415–443 (PSSTNVESSAEGAPPPGPAPPPATSHPRV) is repeat 2. Composition is skewed to pro residues over residues 427-438 (APPPGPAPPPAT) and 507-520 (PTPPQARPSHPGGP). Positions 569–586 (ATASASAGTTNTATTAGP) are enriched in low complexity. 2 tandem repeats follow at residues 574–602 (SAGTTNTATTAGPAPGGPAQPPPTPQPSM) and 608–636 (SQLLGNLLGPAGPGAGGSGVASPTITVAM). The span at 588 to 599 (PGGPAQPPPTPQ) shows a compositional bias: pro residues. Positions 651-692 (QATQTAPPPPPPPPPPPPAPEQQTMPPPGSPSGGAGSPGGLG) are disordered. Pro residues predominate over residues 656 to 680 (APPPPPPPPPPPPAPEQQTMPPPGS). Positions 681–692 (PSGGAGSPGGLG) are enriched in gly residues. 3 positions are modified to phosphoserine: Val832, Ser964, and Ser973. The segment at 947 to 1132 (PQPLPEEPME…NAQRAFADDP (186 aa)) is disordered. Residues 1005–1020 (AETEPWAAAVPPEWVP) show a composition bias toward low complexity. A required for interaction with GET4 region spans residues 1010-1040 (WAAAVPPEWVPIIQQDIQSQRKVKPQPPLSD). The Nuclear localization site signature appears at 1012 to 1054 (AAVPPEWVPIIQQDIQSQRKVKPQPPLSDAYLSGMPAKRRKTM). The tract at residues 1022–1132 (IQQDIQSQRK…NAQRAFADDP (111 aa)) is sufficient for the delivery of client proteins to the endoplasmic reticulum. Phosphothreonine is present on Thr1053. The BAG-similar domain, required and sufficient for interaction with UBL4A stretch occupies residues 1058 to 1115 (GPQLLLSEAVSRAAKAAGARPLTSPESLSRDLEAPEVQESYRQQLRSDIQKRLQEDPN). Over residues 1066–1076 (AVSRAAKAAGA) the composition is skewed to low complexity. A phosphoserine mark is found at Ser1081 and Ser1117.

In terms of assembly, component of the BAG6/BAT3 complex, also named BAT3 complex, at least composed of BAG6, UBL4A and GET4/TRC35. Interacts with GET4; the interaction is direct and localizes BAG6 in the cytosol. Interacts with UBL4A; the interaction is direct and required for UBL4A protein stability. Interacts with AIFM1. Interacts with HSPA2. Interacts with CTCFL. Interacts with p300/EP300. Interacts (via ubiquitin-like domain) with RNF126; required for BAG6-dependent ubiquitination of proteins mislocalized to the cytosol. Interacts (via ubiquitin-like domain) with SGTA; SGTA competes with RNF126 by binding the same region of BAG6, thereby promoting deubiquitination of BAG6-target proteins and rescuing them from degradation. Interacts with ricin A chain. Interacts with VCP and AMFR; both form the VCP/p97-AMFR/gp78 complex. Interacts with SYVN1. Interacts with USP13; the interaction is direct and may mediate UBL4A deubiquitination. Interacts with ZFAND2B. Interacts with KPNA2. Interacts with UBQLN4. (Microbial infection) Interacts with L.pneumophila Lpg2160 and LegU1 proteins. In terms of processing, ricin can induce a cleavage by the caspase CASP3. The released C-terminal peptide induces apoptosis. Post-translationally, (Microbial infection) In case of infection by L.pneumophila, ubiquitinated by the SCF(LegU1) complex. In terms of tissue distribution, expressed by immature dendritic cells (at protein level).

The protein resides in the cytoplasm. Its subcellular location is the cytosol. It is found in the nucleus. It localises to the secreted. The protein localises to the extracellular exosome. ATP-independent molecular chaperone preventing the aggregation of misfolded and hydrophobic patches-containing proteins. Functions as part of a cytosolic protein quality control complex, the BAG6/BAT3 complex, which maintains these client proteins in a soluble state and participates in their proper delivery to the endoplasmic reticulum or alternatively can promote their sorting to the proteasome where they undergo degradation. The BAG6/BAT3 complex is involved in the post-translational delivery of tail-anchored/type II transmembrane proteins to the endoplasmic reticulum membrane. Recruited to ribosomes, it interacts with the transmembrane region of newly synthesized tail-anchored proteins and together with SGTA and ASNA1 mediates their delivery to the endoplasmic reticulum. Client proteins that cannot be properly delivered to the endoplasmic reticulum are ubiquitinated by RNF126, an E3 ubiquitin-protein ligase associated with BAG6 and are sorted to the proteasome. SGTA which prevents the recruitment of RNF126 to BAG6 may negatively regulate the ubiquitination and the proteasomal degradation of client proteins. Similarly, the BAG6/BAT3 complex also functions as a sorting platform for proteins of the secretory pathway that are mislocalized to the cytosol either delivering them to the proteasome for degradation or to the endoplasmic reticulum. The BAG6/BAT3 complex also plays a role in the endoplasmic reticulum-associated degradation (ERAD), a quality control mechanism that eliminates unwanted proteins of the endoplasmic reticulum through their retrotranslocation to the cytosol and their targeting to the proteasome. It maintains these retrotranslocated proteins in an unfolded yet soluble state condition in the cytosol to ensure their proper delivery to the proteasome. BAG6 is also required for selective ubiquitin-mediated degradation of defective nascent chain polypeptides by the proteasome. In this context, it may participate in the production of antigenic peptides and play a role in antigen presentation in immune response. BAG6 is also involved in endoplasmic reticulum stress-induced pre-emptive quality control, a mechanism that selectively attenuates the translocation of newly synthesized proteins into the endoplasmic reticulum and reroutes them to the cytosol for proteasomal degradation. BAG6 may ensure the proper degradation of these proteins and thereby protects the endoplasmic reticulum from protein overload upon stress. By inhibiting the polyubiquitination and subsequent proteasomal degradation of HSPA2 it may also play a role in the assembly of the synaptonemal complex during spermatogenesis. Also positively regulates apoptosis by interacting with and stabilizing the proapoptotic factor AIFM1. By controlling the steady-state expression of the IGF1R receptor, indirectly regulates the insulin-like growth factor receptor signaling pathway. In terms of biological role, involved in DNA damage-induced apoptosis: following DNA damage, accumulates in the nucleus and forms a complex with p300/EP300, enhancing p300/EP300-mediated p53/TP53 acetylation leading to increase p53/TP53 transcriptional activity. When nuclear, may also act as a component of some chromatin regulator complex that regulates histone 3 'Lys-4' dimethylation (H3K4me2). Its function is as follows. Released extracellularly via exosomes, it is a ligand of the natural killer/NK cells receptor NCR3 and stimulates NK cells cytotoxicity. It may thereby trigger NK cells cytotoxicity against neighboring tumor cells and immature myeloid dendritic cells (DC). Functionally, mediates ricin-induced apoptosis. This is Large proline-rich protein BAG6 from Homo sapiens (Human).